The following is a 273-amino-acid chain: DNA repair protein RecO (273 aa).

This sequence belongs to the RecO family.

In terms of biological role, involved in DNA repair and RecF pathway recombination. The sequence is that of DNA repair protein RecO from Saccharopolyspora erythraea (strain ATCC 11635 / DSM 40517 / JCM 4748 / NBRC 13426 / NCIMB 8594 / NRRL 2338).